Consider the following 162-residue polypeptide: Lipoprotein signal peptidase (162 aa).

The next 4 helical transmembrane spans lie at 12–32 (WFAL…YFNS), 42–62 (VVEG…FSFL), 66–86 (GGWQ…WLGW), and 93–113 (FSGL…GNVI). Active-site residues include D123 and D142. A helical transmembrane segment spans residues 133–153 (WYYPAFNLADSFICVGAALMV).

Belongs to the peptidase A8 family.

The protein localises to the cell inner membrane. The catalysed reaction is Release of signal peptides from bacterial membrane prolipoproteins. Hydrolyzes -Xaa-Yaa-Zaa-|-(S,diacylglyceryl)Cys-, in which Xaa is hydrophobic (preferably Leu), and Yaa (Ala or Ser) and Zaa (Gly or Ala) have small, neutral side chains.. It functions in the pathway protein modification; lipoprotein biosynthesis (signal peptide cleavage). This protein specifically catalyzes the removal of signal peptides from prolipoproteins. The protein is Lipoprotein signal peptidase of Chromobacterium violaceum (strain ATCC 12472 / DSM 30191 / JCM 1249 / CCUG 213 / NBRC 12614 / NCIMB 9131 / NCTC 9757 / MK).